Reading from the N-terminus, the 255-residue chain is 3-deoxy-manno-octulosonate cytidylyltransferase (255 aa).

Belongs to the KdsB family.

It localises to the cytoplasm. The catalysed reaction is 3-deoxy-alpha-D-manno-oct-2-ulosonate + CTP = CMP-3-deoxy-beta-D-manno-octulosonate + diphosphate. It participates in nucleotide-sugar biosynthesis; CMP-3-deoxy-D-manno-octulosonate biosynthesis; CMP-3-deoxy-D-manno-octulosonate from 3-deoxy-D-manno-octulosonate and CTP: step 1/1. Its pathway is bacterial outer membrane biogenesis; lipopolysaccharide biosynthesis. Functionally, activates KDO (a required 8-carbon sugar) for incorporation into bacterial lipopolysaccharide in Gram-negative bacteria. The protein is 3-deoxy-manno-octulosonate cytidylyltransferase of Polaromonas sp. (strain JS666 / ATCC BAA-500).